A 751-amino-acid chain; its full sequence is Kelch-like protein 1 (751 aa).

Composition is skewed to low complexity over residues 25–36 (PSPASSSPAGGS) and 74–90 (SSSS…ASSS). Disordered stretches follow at residues 25–54 (PSPA…GPSQ), 69–98 (FWKK…LNGT), and 157–184 (SSIQ…SDLD). A compositionally biased stretch (polar residues) spans 170-184 (LTSTNHSLTPQSDLD). Positions 215–282 (CDVILIVGNR…AYTGCLELKE (68 aa)) constitute a BTB domain. Kelch repeat units lie at residues 463 to 509 (TLYA…VIDD), 510 to 556 (KLFV…VLEG), 558 to 603 (IYAV…ALNG), 604 to 650 (KLYS…TCDG), 652 to 703 (LYAV…LLGD), and 704 to 750 (RLYA…VIKQ).

Highly expressed in brain.

It is found in the cytoplasm. The protein localises to the cytoskeleton. Functionally, may play a role in organizing the actin cytoskeleton of the brain cells. The protein is Kelch-like protein 1 (Klhl1) of Mus musculus (Mouse).